A 356-amino-acid polypeptide reads, in one-letter code: DNA polymerase IV (356 aa).

Residues 6 to 187 (IIHIDMDYFF…LDIGDFPGVG (182 aa)) form the UmuC domain. Residues Asp-10 and Asp-105 each contribute to the Mg(2+) site. Glu-106 is a catalytic residue.

This sequence belongs to the DNA polymerase type-Y family. As to quaternary structure, monomer. Mg(2+) serves as cofactor.

The protein resides in the cytoplasm. The catalysed reaction is DNA(n) + a 2'-deoxyribonucleoside 5'-triphosphate = DNA(n+1) + diphosphate. Poorly processive, error-prone DNA polymerase involved in untargeted mutagenesis. Copies undamaged DNA at stalled replication forks, which arise in vivo from mismatched or misaligned primer ends. These misaligned primers can be extended by PolIV. Exhibits no 3'-5' exonuclease (proofreading) activity. May be involved in translesional synthesis, in conjunction with the beta clamp from PolIII. The protein is DNA polymerase IV of Staphylococcus epidermidis (strain ATCC 35984 / DSM 28319 / BCRC 17069 / CCUG 31568 / BM 3577 / RP62A).